The following is a 356-amino-acid chain: Thiamine thiazole synthase, chloroplastic (356 aa).

The transit peptide at 1 to 51 (MAAMASTAFAPSVSSTTNKLFDSSFHGAPMSPSLLRLQPIKSSRPNNLSIS) directs the protein to the chloroplast. Residues Ala101, 121–122 (EQ), Gly129, and Ala194 contribute to the substrate site. Cys223 is modified (2,3-didehydroalanine (Cys)). Residues Asp225, His240, Met292, and 302 to 304 (RMG) each bind substrate.

Belongs to the THI4 family. Homooctamer. Fe cation is required as a cofactor. During the catalytic reaction, a sulfide is transferred from Cys-223 to a reaction intermediate, generating a dehydroalanine residue.

Its subcellular location is the plastid. It localises to the chloroplast. It carries out the reaction [ADP-thiazole synthase]-L-cysteine + glycine + NAD(+) = [ADP-thiazole synthase]-dehydroalanine + ADP-5-ethyl-4-methylthiazole-2-carboxylate + nicotinamide + 3 H2O + 2 H(+). In terms of biological role, involved in biosynthesis of the thiamine precursor thiazole. Catalyzes the conversion of NAD and glycine to adenosine diphosphate 5-(2-hydroxyethyl)-4-methylthiazole-2-carboxylic acid (ADT), an adenylated thiazole intermediate. The reaction includes an iron-dependent sulfide transfer from a conserved cysteine residue of the protein to a thiazole intermediate. The enzyme can only undergo a single turnover, which suggests it is a suicide enzyme. May have additional roles in adaptation to various stress conditions and in DNA damage tolerance. The protein is Thiamine thiazole synthase, chloroplastic of Citrus sinensis (Sweet orange).